Reading from the N-terminus, the 98-residue chain is MAPRKPSKKVGPQKRPSAEKRVITSKKKQLRNQSFKSKVRTILKKFELAVQSGDVESISAGLRSVYSIADKAVKRGIFKKGKADRVKSRTSERACPAA.

The segment covering 1–12 (MAPRKPSKKVGP) has biased composition (basic residues). The disordered stretch occupies residues 1-31 (MAPRKPSKKVGPQKRPSAEKRVITSKKKQLR).

Belongs to the bacterial ribosomal protein bS20 family.

Binds directly to 16S ribosomal RNA. This is Small ribosomal subunit protein bS20 from Chlamydia trachomatis serovar A (strain ATCC VR-571B / DSM 19440 / HAR-13).